The sequence spans 104 residues: MEKYAFRMRLHPGKAAEYQARHDAIWPELVTLLKDAGVSDYSIHLDEENCLLFGVLWRSDDHRMGDLPSHPVMRKWWAHMADIMETRADNEPVAVPLKTVFHLK.

Residue tyrosine 18 participates in substrate binding. Histidine 22 functions as the Proton donor in the catalytic mechanism. Substrate contacts are provided by residues tyrosine 41 and tryptophan 76–tryptophan 77.

The protein belongs to the rhamnose mutarotase family. Homodimer.

It is found in the cytoplasm. The enzyme catalyses alpha-L-rhamnose = beta-L-rhamnose. It participates in carbohydrate metabolism; L-rhamnose metabolism. Involved in the anomeric conversion of L-rhamnose. This is L-rhamnose mutarotase from Rhizobium meliloti (strain 1021) (Ensifer meliloti).